Consider the following 246-residue polypeptide: 2,5-diamino-6-ribosylamino-4(3H)-pyrimidinone 5'-phosphate reductase (246 aa).

NADP(+)-binding positions include T78, D82, L163, and 186–190 (GAEVL).

The protein belongs to the HTP reductase family. As to quaternary structure, homodimer.

The enzyme catalyses 2,5-diamino-6-(1-D-ribitylamino)pyrimidin-4(3H)-one 5'-phosphate + NADP(+) = 2,5-diamino-6-(1-D-ribosylamino)pyrimidin-4(3H)-one 5'-phosphate + NADPH + H(+). It carries out the reaction 2,5-diamino-6-(1-D-ribitylamino)pyrimidin-4(3H)-one 5'-phosphate + NAD(+) = 2,5-diamino-6-(1-D-ribosylamino)pyrimidin-4(3H)-one 5'-phosphate + NADH + H(+). The protein operates within cofactor biosynthesis; riboflavin biosynthesis. Functionally, catalyzes an early step in riboflavin biosynthesis, the NADPH-dependent reduction of the ribose side chain of 2,5-diamino-6-ribosylamino-4(3H)-pyrimidinone 5'-phosphate, yielding 2,5-diamino-6-ribitylamino-4(3H)-pyrimidinone 5'-phosphate. This Eremothecium gossypii (strain ATCC 10895 / CBS 109.51 / FGSC 9923 / NRRL Y-1056) (Yeast) protein is 2,5-diamino-6-ribosylamino-4(3H)-pyrimidinone 5'-phosphate reductase (RIB7).